Reading from the N-terminus, the 311-residue chain is LOB domain-containing protein 10 (311 aa).

In terms of domain architecture, LOB spans 4 to 105 (TPCAACKLLR…QDLLTAKEEL (102 aa)). Residues 264–277 (LQEGQEQTEEGQFL) show a composition bias toward low complexity. The tract at residues 264 to 311 (LQEGQEQTEEGQFLMQPMGQENLHDEEEEEELEPPVKWRMSENKEASF) is disordered. Positions 287–296 (HDEEEEEELE) are enriched in acidic residues. The span at 297–311 (PPVKWRMSENKEASF) shows a compositional bias: basic and acidic residues.

Belongs to the LOB domain-containing protein family.

The polypeptide is LOB domain-containing protein 10 (LBD10) (Arabidopsis thaliana (Mouse-ear cress)).